We begin with the raw amino-acid sequence, 330 residues long: Carbonic anhydrase (330 aa).

The chloroplast transit peptide-like stretch occupies residues 1 to 109 (MSTASAFATN…AAARIDQITA (109 aa)).

The protein belongs to the beta-class carbonic anhydrase family.

Its subcellular location is the cytoplasm. It catalyses the reaction hydrogencarbonate + H(+) = CO2 + H2O. In terms of biological role, reversible hydration of carbon dioxide. The sequence is that of Carbonic anhydrase from Flaveria brownii (Brown's yellowtops).